A 351-amino-acid polypeptide reads, in one-letter code: UDP-N-acetylglucosamine--N-acetylmuramyl-(pentapeptide) pyrophosphoryl-undecaprenol N-acetylglucosamine transferase (351 aa).

UDP-N-acetyl-alpha-D-glucosamine is bound by residues 11–13, Asn-120, Arg-161, Ser-187, and Gln-281; that span reads TGG.

The protein belongs to the glycosyltransferase 28 family. MurG subfamily.

The protein localises to the cell inner membrane. It carries out the reaction di-trans,octa-cis-undecaprenyl diphospho-N-acetyl-alpha-D-muramoyl-L-alanyl-D-glutamyl-meso-2,6-diaminopimeloyl-D-alanyl-D-alanine + UDP-N-acetyl-alpha-D-glucosamine = di-trans,octa-cis-undecaprenyl diphospho-[N-acetyl-alpha-D-glucosaminyl-(1-&gt;4)]-N-acetyl-alpha-D-muramoyl-L-alanyl-D-glutamyl-meso-2,6-diaminopimeloyl-D-alanyl-D-alanine + UDP + H(+). It functions in the pathway cell wall biogenesis; peptidoglycan biosynthesis. Cell wall formation. Catalyzes the transfer of a GlcNAc subunit on undecaprenyl-pyrophosphoryl-MurNAc-pentapeptide (lipid intermediate I) to form undecaprenyl-pyrophosphoryl-MurNAc-(pentapeptide)GlcNAc (lipid intermediate II). In Rippkaea orientalis (strain PCC 8801 / RF-1) (Cyanothece sp. (strain PCC 8801)), this protein is UDP-N-acetylglucosamine--N-acetylmuramyl-(pentapeptide) pyrophosphoryl-undecaprenol N-acetylglucosamine transferase.